We begin with the raw amino-acid sequence, 851 residues long: MTSHYVIAIFALMSSCLATAGPEPGALCELSPVSASHPVQALMESFTVLSGCASRGTTGLPQEVHVLNLRTAGQGPGQLQREVTLHLNPISSVHIHHKSVVFLLNSPHPLVWHLKTERLATGVSRLFLVSEGSVVQFSSANFSLTAETEERNFPHGNEHLLNWARKEYGAVTSFTELKIARNIYIKVGEDQVFPPKCNIGKNFLSLNYLAEYLQPKAAEGCVMSSQPQNEEVHIIELITPNSNPYSAFQVDITIDIRPSQEDLEVVKNLILILKCKKSVNWVIKSFDVKGSLKIIAPNSIGFGKESERSMTMTKSIRDDIPSTQGNLVKWALDNGYSPITSYTMAPVANRFHLRLENNAEEMGDEEVHTIPPELRILLDPGALPALQNPPIRGGEGQNGGLPFPFPDISRRVWNEEGEDGLPRPKDPVIPSIQLFPGLREPEEVQGSVDIALSVKCDNEKMIVAVEKDSFQASGYSGMDVTLLDPTCKAKMNGTHFVLESPLNGCGTRPRWSALDGVVYYNSIVIQVPALGDSSGWPDGYEDLESGDNGFPGDMDEGDASLFTRPEIVVFNCSLQQVRNPSSFQEQPHGNITFNMELYNTDLFLVPSQGVFSVPENGHVYVEVSVTKAEQELGFAIQTCFISPYSNPDRMSHYTIIENICPKDESVKFYSPKRVHFPIPQADMDKKRFSFVFKPVFNTSLLFLQCELTLCTKMEKHPQKLPKCVPPDEACTSLDASIIWAMMQNKKTFTKPLAVIHHEAESKEKGPSMKEPNPISPPIFHGLDTLTVMGIAFAAFVIGALLTGALWYIYSHTGETAGRQQVPTSPPASENSSAAHSIGSTQSTPCSSSSTA.

Residues 1 to 20 (MTSHYVIAIFALMSSCLATA) form the signal peptide. At 21-787 (GPEPGALCEL…IFHGLDTLTV (767 aa)) the chain is on the extracellular side. Cysteines 52 and 197 form a disulfide. 2 N-linked (GlcNAc...) asparagine glycosylation sites follow: asparagine 141 and asparagine 492. The region spanning 455 to 730 (KCDNEKMIVA…PKCVPPDEAC (276 aa)) is the ZP domain. O-linked (Xyl...) (glycosaminoglycan) serine glycans are attached at residues serine 534 and serine 545. N-linked (GlcNAc...) asparagine glycans are attached at residues asparagine 571, asparagine 590, and asparagine 697. 3 cysteine pairs are disulfide-bonded: cysteine 639–cysteine 705, cysteine 660–cysteine 730, and cysteine 710–cysteine 723. Residues 737–751 (IIWAMMQNKKTFTKP) form an interaction with TGF-beta ligand region. A helical transmembrane segment spans residues 788 to 809 (MGIAFAAFVIGALLTGALWYIY). At 810-851 (SHTGETAGRQQVPTSPPASENSSAAHSIGSTQSTPCSSSSTA) the chain is on the cytoplasmic side. The interval 816 to 851 (AGRQQVPTSPPASENSSAAHSIGSTQSTPCSSSSTA) is disordered. Polar residues predominate over residues 817–834 (GRQQVPTSPPASENSSAA). The span at 836–851 (SIGSTQSTPCSSSSTA) shows a compositional bias: low complexity. Threonine 840 is subject to Phosphothreonine.

Forms homodimers and homooligomers. Interacts with DYNLT4. Interacts with integrin ITGA5:ITGB1; this interaction promotes the internalization and trafficking of ITGA5:ITGB1 into endocytic vesicles. Interacts with TGFB1, BMP2, BMP5, BMP7 or GDF5 and inhibin A via the ligand binding domains. Interacts with ALK3/BMPR1A; this interaction results in the cell surface retention of BMPR1A. Interacts with ALK6/BMPR1B; this interaction enhances BMPR1B-mediated stimulation of the BMP signaling pathway. Interacts with the scaffolding protein beta-arrestin2/ARRB2; this interaction mediates internalization of TGFBR3 and thus regulates migration, actin cytoskeleton and activation of CDC42. As to quaternary structure, (Microbial infection) Interacts with human cytomegalovirus trimer complex composed of gH, gL, and gO; these interactions may promote HCMV cell entry in specific cell types. In terms of processing, extensively modified by glycosaminoglycan groups (GAG). Post-translationally, phosphorylated in the cytoplasmic domain by the type II receptor TGFBR2 at THR-840 to mediate recruitment of ARRB2 and subsequent internalization of TGFBR2 and TGFBR3.

Its subcellular location is the cell membrane. It is found in the secreted. The protein localises to the extracellular space. The protein resides in the extracellular matrix. Its function is as follows. Cell surface receptor that regulates diverse cellular processes including cell proliferation, differentiation, migration, and apoptosis. Initiates BMP, inhibin, and TGF-beta signaling pathways by interacting with different ligands including TGFB1, BMP2, BMP5, BMP7 or GDF5. Alternatively, acts as a cell surface coreceptor for BMP ligands, serving to enhance ligand binding by differentially regulating BMPR1A/ALK3 and BMPR1B/ALK6 receptor trafficking. Promotes epithelial cell adhesion, focal adhesion formation and integrin signaling during epithelial cell spreading on fibronectin. By interacting with the scaffolding protein beta-arrestin2/ARRB2, regulates migration or actin cytoskeleton and promotes the activation of CDC42 as well as the inhibition of NF-kappa-B. In gonadotrope cells, acts as an inhibin A coreceptor and regulates follicle-stimulating hormone (FSH) levels and female fertility. Plays a role in the inhibition of directed and random cell migration in epithelial cells by altering the actin cytoskeletal organization. Participates in epithelial-mesenchymal transformation (EMT) upon binding to BMP2 or TGFB2, by activating the PAR6/SMURF1/RHOA pathway. In terms of biological role, (Microbial infection) May act as a receptor for human cytomegalovirus in different cell types by interacting with HCMV trimer composed of GO, GH and GL. In Homo sapiens (Human), this protein is Transforming growth factor beta receptor type 3.